The sequence spans 916 residues: Pertactin autotransporter (916 aa).

The N-terminal stretch at 1–37 (MNMSLSRIVKAAPLRRTTLAMALGALGALGAAPAAHA) is a signal peptide. The Cell attachment site; involved in adhesion to various eukaryotic cell lines motif lies at 263-265 (RGD). Repeat copies occupy residues 269–273 (GGAVP), 274–278 (GGAVP), and 279–283 (GGAVP). The segment at 269–288 (GGAVPGGAVPGGAVPGGFGP) is 4 X 5 AA tandem repeats of G-G-A-V-P. One copy of the 4; approximate repeat lies at 284 to 288 (GGFGP). The tract at residues 564–613 (SLVGAKAPPAPKPAPQPGPQPGPQPPQPPQPPQRQPEAPAPQPPAGRELS) is disordered. Residues 571 to 607 (PPAPKPAPQPGPQPGPQPPQPPQPPQRQPEAPAPQPP) are compositionally biased toward pro residues. A 6 X 3 AA repeats of P-Q-P region spans residues 578-606 (PQPGPQPGPQPPQPPQPPQRQPEAPAPQP). The Autotransporter domain maps to 648-916 (LNPDAGGAWG…TFHAGYRYSW (269 aa)). Positions 706-708 (RGD) match the Cell attachment site motif.

Monomer.

The protein resides in the periplasm. The protein localises to the secreted. Its subcellular location is the cell surface. It is found in the cell outer membrane. Agglutinogen that binds to eukaryotic cells; a process mediated by the R-G-D sequence. Pertactin may have a role in bacterial adhesion, and thus play a role in virulence. May contribute to the disease state of whooping cough. This chain is Pertactin autotransporter (prn), found in Bordetella bronchiseptica (strain ATCC BAA-588 / NCTC 13252 / RB50) (Alcaligenes bronchisepticus).